The primary structure comprises 1183 residues: MDGWTEISRIAATTQPPKGPSPHIHEPASITSLKFDSVQNLIWCGDSFGYTRSFTPGPNSNGVNPYQQSLSFLPYTKFKSSLNNNPILQHLDHKDGILSLSSNCINFNNRRGLAKLSLSSDSFVDANSVLFKNLTSLTTNCNTMNDIVVGSNLSLLKFDLNKPSHLMSFNHDGNISIVNQTSKFLTLGKANGALELFDPVSNSSIKSFQGHTGLLSDLDVQGSYIATCGYSIRPRRYNHNSQNSNNDYMVDPLVNIYDVRMMRAVAPIPFPAGASCVRFHPKLPNIVLISSNSGQLQFVDIYDQTNVFLYQADLMPTSQPRQPSQLSKAPFMTNLEISENGDFFAFSDSYATMHLWTLNNSGSTITKDFVNFPASIEQPDVIIPPATEHIGVDDLVPLSTIGMPYYKDLLLSNYASDLSFTKELAKLPDPIDHDLLVESESHVGFFPYDKSKYGPANTAKKYQSLKERSNIHSTVNVPKFISERNNALTKTMSNTSLALQNLNKEHHNEIFQYKVPLSRKKIPNCYSRLQIQYSKFGVKDFDFSYYNRTDGLYCGLENDADNSYVNPLLQLYKFQPAFHNLMVRNLTNEWLPNDFETIITQKNPQGSSILNELGYLFDMMNKAKDKNVNMSNFSQVFKENRLAQTENLINLDEGAKLNSQALRNLIIGFNKFLIAEVYKDLMNQARDSSISSLMTVSYVMEVRGTGPSCPIYDKQFGSQLSLDLLTPPSNVLNKLSILLNPQINTQQQVVTPTTTRRNHNLITYLEYTINQFKTIPCQQHQHQYPHTLEVRSSITKLPPLLSLNVNLSNEEFKLINGFKKWLVPEFYALNNNNDAPIAFKPVLTQFDQDSTRYELLGYVCEISQQSDFSLGTHNLVSYVKIDGRWFLFNDFLVMQIPEEEVFNLSYPWKKPVILVYHDSSISGIPFDLFQIETFANLPGLNDSIIYRDHFAGSIRESHKKDYELLTRQEAPSLGTLIAIDAEFVNLRPEELEVRYDGHKKLIKPKFLSLARLSALRGDNGEKQGVAFIDDYVVHTGEIYDYLTSFSGIEPGDLDPINSEKNLVTLQTVYRKLWLLLNLGVVFVGHGLYNDFRGINLQVPQNQIRDTADFYYKSDFKRQLSLKFLAYVLLKEKVQTGNHDSIEDAYTALLLYKKYIEITATGEYESTLNYIYSEGQQLRFKVPE.

The tract at residues 1–24 is disordered; sequence MDGWTEISRIAATTQPPKGPSPHI. 3 WD repeats span residues 159–207, 269–309, and 327–366; these read DLNK…SIKS, PFPA…NVFL, and SKAP…STIT. The interval 369–520 is linker; it reads FVNFPASIEQ…FQYKVPLSRK (152 aa). The region spanning 521 to 919 is the USP domain; the sequence is KIPNCYSRLQ…KPVILVYHDS (399 aa). The region spanning 977 to 1151 is the Exonuclease domain; the sequence is IAIDAEFVNL…EDAYTALLLY (175 aa). Positions 980, 982, 1090, and 1143 each coordinate a divalent metal cation.

The protein belongs to the peptidase C19 family. PAN2 subfamily. In terms of assembly, forms a heterotrimer with an asymmetric homodimer of the regulatory subunit PAN3 to form the poly(A)-nuclease (PAN) deadenylation complex. It depends on a divalent metal cation as a cofactor.

The protein resides in the cytoplasm. It carries out the reaction Exonucleolytic cleavage of poly(A) to 5'-AMP.. Its activity is regulated as follows. Positively regulated by the regulatory subunit PAN3. Catalytic subunit of the poly(A)-nuclease (PAN) deadenylation complex, one of two cytoplasmic mRNA deadenylases involved in mRNA turnover. PAN specifically shortens poly(A) tails of RNA and the activity is stimulated by poly(A)-binding protein PAB1. PAN deadenylation is followed by rapid degradation of the shortened mRNA tails by the CCR4-NOT complex. Deadenylated mRNAs are then degraded by two alternative mechanisms, namely exosome-mediated 3'-5' exonucleolytic degradation, or deadenylation-dependent mRNA decaping and subsequent 5'-3' exonucleolytic degradation by XRN1. May also be involved in post-transcriptional maturation of mRNA poly(A) tails. The protein is PAN2-PAN3 deadenylation complex catalytic subunit PAN2 of Scheffersomyces stipitis (strain ATCC 58785 / CBS 6054 / NBRC 10063 / NRRL Y-11545) (Yeast).